We begin with the raw amino-acid sequence, 620 residues long: 1-deoxy-D-xylulose-5-phosphate synthase (620 aa).

Thiamine diphosphate contacts are provided by residues histidine 80 and 121–123 (GHS). Aspartate 152 serves as a coordination point for Mg(2+). Thiamine diphosphate contacts are provided by residues 153–154 (GA), asparagine 181, tyrosine 288, and glutamate 370. Position 181 (asparagine 181) interacts with Mg(2+).

This sequence belongs to the transketolase family. DXPS subfamily. As to quaternary structure, homodimer. Mg(2+) is required as a cofactor. The cofactor is thiamine diphosphate.

It carries out the reaction D-glyceraldehyde 3-phosphate + pyruvate + H(+) = 1-deoxy-D-xylulose 5-phosphate + CO2. The protein operates within metabolic intermediate biosynthesis; 1-deoxy-D-xylulose 5-phosphate biosynthesis; 1-deoxy-D-xylulose 5-phosphate from D-glyceraldehyde 3-phosphate and pyruvate: step 1/1. Its function is as follows. Catalyzes the acyloin condensation reaction between C atoms 2 and 3 of pyruvate and glyceraldehyde 3-phosphate to yield 1-deoxy-D-xylulose-5-phosphate (DXP). This Klebsiella pneumoniae subsp. pneumoniae (strain ATCC 700721 / MGH 78578) protein is 1-deoxy-D-xylulose-5-phosphate synthase.